A 483-amino-acid polypeptide reads, in one-letter code: Septin-8 (483 aa).

Residues 1–16 (MAATDLERFSNAEPEP) show a composition bias toward basic and acidic residues. The segment at 1-22 (MAATDLERFSNAEPEPRSLSLG) is disordered. Residue A2 is modified to N-acetylalanine. Position 10 is a phosphoserine (S10). The Septin-type G domain maps to 41-307 (QGFSFNILCV…ELYRRCKLEE (267 aa)). Residues 51-58 (GETGIGKS) form a G1 motif region. Residues 51–58 (GETGIGKS), G106, 187–195 (KADTISKSE), G241, and R256 contribute to the GTP site. Positions 103-106 (DAVG) are G3 motif. The interval 186–189 (AKAD) is G4 motif. Positions 320 to 413 (FSLQETYEAK…AVEALQSQAL (94 aa)) form a coiled coil. A compositionally biased stretch (polar residues) spans 411 to 420 (QALHATSQQP). The disordered stretch occupies residues 411–443 (QALHATSQQPLRKDKDKKNRSDIGAHQPGMSLS). Residues 421–433 (LRKDKDKKNRSDI) show a composition bias toward basic and acidic residues.

The protein belongs to the TRAFAC class TrmE-Era-EngA-EngB-Septin-like GTPase superfamily. Septin GTPase family. In terms of assembly, septins polymerize into heterooligomeric protein complexes that form filaments, and can associate with cellular membranes, actin filaments and microtubules. GTPase activity is required for filament formation. Interacts with CDK14. Interacts with SEPTIN5. Interacts with SEPTIN7. Interacts with SEPTIN4. Interacts with VAMP2; the interaction inhibits interaction of VAMP2 with SYP. Interacts with STX1A. In terms of tissue distribution, widely expressed, including in brain, heart and platelets; most abundant in aorta. Isoform 2 is expressed at low levels in specific brain areas, such as occipital pole, frontal lobe, temporal lobe and putamen. Isoform 1 and 3 are highly expressed in specific brain areas, such as occipital pole, frontal lobe, temporal lobe and putamen. Isoform 2 is highly expressed in prostate, testis and ovary. Isoform 1 and isoform 3 are expressed at low levels in prostate, testis and ovary.

It localises to the cytoplasm. The protein localises to the cytoskeleton. It is found in the synapse. Its subcellular location is the cell projection. The protein resides in the axon. It localises to the cytoplasmic vesicle. The protein localises to the secretory vesicle. It is found in the synaptic vesicle membrane. Its subcellular location is the presynapse. Functionally, filament-forming cytoskeletal GTPase. May play a role in platelet secretion. Seems to participate in the process of SNARE complex formation in synaptic vesicles. In terms of biological role, stabilizes BACE1 protein levels and promotes the sorting and accumulation of BACE1 to the recycling or endosomal compartments, modulating the beta-amyloidogenic processing of APP. This chain is Septin-8, found in Homo sapiens (Human).